The following is an 812-amino-acid chain: Glycerol-3-phosphate acyltransferase (812 aa).

Residues 308–313 carry the HXXXXD motif motif; sequence CHRSHM.

This sequence belongs to the GPAT/DAPAT family.

It is found in the cell inner membrane. The catalysed reaction is sn-glycerol 3-phosphate + an acyl-CoA = a 1-acyl-sn-glycero-3-phosphate + CoA. It participates in phospholipid metabolism; CDP-diacylglycerol biosynthesis; CDP-diacylglycerol from sn-glycerol 3-phosphate: step 1/3. In Pseudoalteromonas translucida (strain TAC 125), this protein is Glycerol-3-phosphate acyltransferase.